The primary structure comprises 303 residues: Ornithine carbamoyltransferase (303 aa).

Carbamoyl phosphate is bound by residues 52–55, Q79, R103, and 130–133; these read STRT and HPCQ. Residues N161, D222, and 226 to 227 each bind L-ornithine; that span reads SM. Residues 262–263 and R290 each bind carbamoyl phosphate; that span reads CL.

The protein belongs to the aspartate/ornithine carbamoyltransferase superfamily. OTCase family.

It is found in the cytoplasm. It carries out the reaction carbamoyl phosphate + L-ornithine = L-citrulline + phosphate + H(+). Its pathway is amino-acid biosynthesis; L-arginine biosynthesis; L-arginine from L-ornithine and carbamoyl phosphate: step 1/3. In terms of biological role, reversibly catalyzes the transfer of the carbamoyl group from carbamoyl phosphate (CP) to the N(epsilon) atom of ornithine (ORN) to produce L-citrulline. The sequence is that of Ornithine carbamoyltransferase from Geobacter sulfurreducens (strain ATCC 51573 / DSM 12127 / PCA).